The following is a 211-amino-acid chain: Minor capsid protein VP2 (211 aa).

The protein belongs to the norovirus VP2 family. As to quaternary structure, homooligomer. The portal-like structure consists in 12 copies of VP2. Interacts with capsid protein VP1.

The protein localises to the virion. The protein resides in the host cytoplasm. Functionally, minor structural protein that forms a portal-like structure at a unique three-fold axis of symmetry, following binding to the host receptor. The channel formed by VP2 may allow the delivery of the viral genome through the host endosomal membrane. In Homo sapiens (Human), this protein is Minor capsid protein VP2.